The following is a 292-amino-acid chain: Tetratricopeptide repeat protein 1 (292 aa).

A disordered region spans residues 20-125 (TDPQEAECLH…SSRLKEEGNE (106 aa)). Composition is skewed to basic and acidic residues over residues 36–49 (KEQH…KDVD) and 75–85 (GADKLENKPED). The segment covering 86 to 98 (DMNPSELDEEYLM) has biased composition (acidic residues). A Phosphoserine modification is found at serine 90. Residues 99–125 (ELEKNMPDEEKKRRREESSRLKEEGNE) are compositionally biased toward basic and acidic residues. 3 TPR repeats span residues 116–149 (SSRL…CPSC), 155–188 (SVLF…NPSY), and 189–222 (IRAI…DPSV).

As to quaternary structure, interacts with the GAP domain of NF1. Interacts (via TPR repeats) with HSP90AA1 and HSPA8.

This Bos taurus (Bovine) protein is Tetratricopeptide repeat protein 1 (TTC1).